The primary structure comprises 394 residues: uncharacterized protein (394 aa).

The next 12 helical transmembrane spans lie at 13-35, 50-72, 79-97, 107-129, 136-158, 168-190, 218-240, 250-272, 277-299, 309-331, 344-366, and 371-393; these read AIIG…VPVL, VGVA…GWLS, LIIN…IAWS, GRGL…ELVL, IMGL…SPII, FLIN…PASL, INLS…PVEL, VPEI…CICF, VLYS…GIFL, ILGL…ALVN, AIYS…ILFS, and FEVL…LYLI.

This sequence belongs to the major facilitator superfamily.

The protein localises to the cell membrane. This is an uncharacterized protein from Buchnera aphidicola subsp. Baizongia pistaciae (strain Bp).